We begin with the raw amino-acid sequence, 175 residues long: Transcription factor E (175 aa).

The HTH TFE/IIEalpha-type domain occupies 3-88; sequence ENPLIQQVLF…TWKPSLEKVP (86 aa).

This sequence belongs to the TFE family. Monomer. Interaction with RNA polymerase subunits RpoF and RpoE is necessary for Tfe stimulatory transcription activity. Able to interact with Tbp and RNA polymerase in the absence of DNA promoter. Interacts both with the preinitiation and elongation complexes.

Functionally, transcription factor that plays a role in the activation of archaeal genes transcribed by RNA polymerase. Facilitates transcription initiation by enhancing TATA-box recognition by TATA-box-binding protein (Tbp), and transcription factor B (Tfb) and RNA polymerase recruitment. Not absolutely required for transcription in vitro, but particularly important in cases where Tbp or Tfb function is not optimal. It dynamically alters the nucleic acid-binding properties of RNA polymerases by stabilizing the initiation complex and destabilizing elongation complexes. Seems to translocate with the RNA polymerase following initiation and acts by binding to the non template strand of the transcription bubble in elongation complexes. In Methanococcus maripaludis (strain DSM 14266 / JCM 13030 / NBRC 101832 / S2 / LL), this protein is Transcription factor E.